A 143-amino-acid polypeptide reads, in one-letter code: Large ribosomal subunit protein uL13 (143 aa).

The protein belongs to the universal ribosomal protein uL13 family. As to quaternary structure, part of the 50S ribosomal subunit.

Its function is as follows. This protein is one of the early assembly proteins of the 50S ribosomal subunit, although it is not seen to bind rRNA by itself. It is important during the early stages of 50S assembly. This chain is Large ribosomal subunit protein uL13, found in Rubrobacter xylanophilus (strain DSM 9941 / JCM 11954 / NBRC 16129 / PRD-1).